The chain runs to 81 residues: Mu/omega-theraphotoxin-Hs1a (81 aa).

Residues 1–21 form the signal peptide; it reads MRASMFLALAGLVLLFVVCYA. Residues 22 to 48 constitute a propeptide that is removed on maturation; sequence SESEEKEFPRELLFKFFAVDDFKGEER. Intrachain disulfides connect C50–C65, C57–C70, and C64–C77.

This sequence belongs to the neurotoxin 10 (Hwtx-1) family. 23 (HwTx-I) subfamily. In terms of tissue distribution, expressed by the venom gland.

Its subcellular location is the secreted. In terms of biological role, lethal toxin with multiple biological activities. Inhibits voltage-gated TTX-sensitive sodium channels in DRG neurons (IC(50)=55 nM) and also shows activity when directly tested on Nav1.7/SCN9A (IC(50)=25.1-630 nM). Inhibits N-type calcium channels (Cav2.2/CACNA1B (IC(50)=100 nM)). Also blocks neuromuscular transmission. In vivo, intrathecal injected toxin shows analgesic activity in the rat formalin-induced pain model, without induction of motor dysfunction in rats. The chain is Mu/omega-theraphotoxin-Hs1a from Cyriopagopus schmidti (Chinese bird spider).